The sequence spans 120 residues: Acyl carrier protein, mitochondrial (120 aa).

One can recognise a Carrier domain in the interval 43–117; sequence KEITDRVIGV…ETISYLRKTP (75 aa). Serine 77 carries the post-translational modification O-(pantetheine 4'-phosphoryl)serine.

It belongs to the acyl carrier protein (ACP) family. As to quaternary structure, complex I is composed of about 45 different subunits. In terms of processing, 4'-phosphopantetheine is transferred from CoA to a specific serine of apo-ACP by acpS. This modification is essential for activity because fatty acids are bound in thioester linkage to the sulfhydryl of the prosthetic group.

It localises to the mitochondrion. The protein operates within lipid metabolism; fatty acid biosynthesis. Its function is as follows. Carrier of the growing fatty acid chain in fatty acid biosynthesis. May be involved in the synthesis of very-long-chain fatty acids. Accessory and non-catalytic subunit of the mitochondrial membrane respiratory chain NADH dehydrogenase (Complex I), which functions in the transfer of electrons from NADH to the respiratory chain. This Dictyostelium discoideum (Social amoeba) protein is Acyl carrier protein, mitochondrial (ndufab1).